The primary structure comprises 293 residues: Glutamyl-Q tRNA(Asp) synthetase (293 aa).

L-glutamate is bound by residues 9-13 and E45; that span reads RFAPS. The 'HIGH' region motif lies at 12–22; the sequence is PSPSGSLHFGS. 4 residues coordinate Zn(2+): C101, C103, Y115, and C119. The L-glutamate site is built by Y172 and R190. The short motif at 228 to 232 is the 'KMSKS' region element; the sequence is KLSKQ. K231 provides a ligand contact to ATP.

This sequence belongs to the class-I aminoacyl-tRNA synthetase family. GluQ subfamily. The cofactor is Zn(2+).

Its function is as follows. Catalyzes the tRNA-independent activation of glutamate in presence of ATP and the subsequent transfer of glutamate onto a tRNA(Asp). Glutamate is transferred on the 2-amino-5-(4,5-dihydroxy-2-cyclopenten-1-yl) moiety of the queuosine in the wobble position of the QUC anticodon. This chain is Glutamyl-Q tRNA(Asp) synthetase, found in Shewanella frigidimarina (strain NCIMB 400).